Consider the following 641-residue polypeptide: 1-deoxy-D-xylulose-5-phosphate synthase (641 aa).

Residues His-71 and 112-114 (SHA) contribute to the thiamine diphosphate site. Asp-144 is a Mg(2+) binding site. Residues 145–146 (GA), Asn-174, Tyr-285, and Glu-366 each bind thiamine diphosphate. Asn-174 provides a ligand contact to Mg(2+).

This sequence belongs to the transketolase family. DXPS subfamily. Homodimer. Requires Mg(2+) as cofactor. Thiamine diphosphate is required as a cofactor.

The enzyme catalyses D-glyceraldehyde 3-phosphate + pyruvate + H(+) = 1-deoxy-D-xylulose 5-phosphate + CO2. It functions in the pathway metabolic intermediate biosynthesis; 1-deoxy-D-xylulose 5-phosphate biosynthesis; 1-deoxy-D-xylulose 5-phosphate from D-glyceraldehyde 3-phosphate and pyruvate: step 1/1. Functionally, catalyzes the acyloin condensation reaction between C atoms 2 and 3 of pyruvate and glyceraldehyde 3-phosphate to yield 1-deoxy-D-xylulose-5-phosphate (DXP). The sequence is that of 1-deoxy-D-xylulose-5-phosphate synthase from Mycobacteroides abscessus (strain ATCC 19977 / DSM 44196 / CCUG 20993 / CIP 104536 / JCM 13569 / NCTC 13031 / TMC 1543 / L948) (Mycobacterium abscessus).